The primary structure comprises 479 residues: Protein TRIGALACTOSYLDIACYLGLYCEROL 4, chloroplastic (479 aa).

A transmembrane span lies at residues 288–310 (VFLSSPHVAVSGIIGSVMTAAFG).

In terms of assembly, homodimer. Forms dimeric beta-barrel. Interacts with TGD5.

It is found in the plastid. The protein resides in the chloroplast outer membrane. Its subcellular location is the endoplasmic reticulum. Involved in lipid transfer from the endoplasmic reticulum (ER) to plastids. Specifically binds phosphatidic acid (PtdOH). This chain is Protein TRIGALACTOSYLDIACYLGLYCEROL 4, chloroplastic, found in Arabidopsis thaliana (Mouse-ear cress).